The following is a 382-amino-acid chain: uncharacterized protein (382 aa).

12 helical membrane-spanning segments follow: residues 14–34 (GLLL…LWLA), 45–65 (VVSS…GYVI), 79–99 (FIFA…SWLA), 102–122 (FVAG…LMCS), 131–151 (LLAA…LLVS), 157–177 (LMSV…PLLF), 204–224 (LGVN…GLMP), 235–255 (ASIG…QWPI), 270–290 (VQVF…AMAP), 291–311 (ALFI…AWAC), 325–345 (ALLL…AMLM), and 348–368 (FSDN…LLML).

The protein belongs to the major facilitator superfamily. YcaD (TC 2.A.1.26) family.

It localises to the cell inner membrane. This is an uncharacterized protein from Escherichia coli O6:K15:H31 (strain 536 / UPEC).